A 258-amino-acid polypeptide reads, in one-letter code: Tryptophan synthase alpha chain (258 aa).

Active-site proton acceptor residues include Glu52 and Asp63.

Belongs to the TrpA family. Tetramer of two alpha and two beta chains.

The catalysed reaction is (1S,2R)-1-C-(indol-3-yl)glycerol 3-phosphate + L-serine = D-glyceraldehyde 3-phosphate + L-tryptophan + H2O. Its pathway is amino-acid biosynthesis; L-tryptophan biosynthesis; L-tryptophan from chorismate: step 5/5. The alpha subunit is responsible for the aldol cleavage of indoleglycerol phosphate to indole and glyceraldehyde 3-phosphate. In Streptococcus pneumoniae (strain P1031), this protein is Tryptophan synthase alpha chain.